The chain runs to 180 residues: CASP-like protein 2A3 (180 aa).

Residues 1-13 (MELIYGSTMRKKW) lie on the Cytoplasmic side of the membrane. A helical membrane pass occupies residues 14–34 (IEPALRFLPVGLCISALALML). Residues 35–55 (KSKEGNENGILEYKHVGAFRY) are Extracellular-facing. Residues 56-76 (LAYANGICAAYSVLSTFNSVV) form a helical membrane-spanning segment. Over 77–85 (PRSCSLSRA) the chain is Cytoplasmic. The helical transmembrane segment at 86–106 (WFVFVFDQAFTYLMLGAGAVV) threads the bilayer. Residues 107–135 (TEVLYLAYKGDEKITWFEICPYYGRFCNR) are Extracellular-facing. The helical transmembrane segment at 136 to 156 (VAASLVISFLALLCFIPLSLI) threads the bilayer. The Cytoplasmic segment spans residues 157 to 180 (SAYRVFSKYDPPSLCKKDQITSQS).

This sequence belongs to the Casparian strip membrane proteins (CASP) family. In terms of assembly, homodimer and heterodimers.

Its subcellular location is the cell membrane. The sequence is that of CASP-like protein 2A3 from Picea sitchensis (Sitka spruce).